Here is a 118-residue protein sequence, read N- to C-terminus: C-type natriuretic peptide 2 (118 aa).

Positions 1 to 22 (MHFCHIVGWGLVLAVLYLRTEA) are cleaved as a signal peptide. A propeptide spanning residues 23-96 (KPVAQAHQKS…SRKIKGINKK (74 aa)) is cleaved from the precursor. A disulfide bridge links Cys-102 with Cys-118.

Belongs to the natriuretic peptide family.

It is found in the secreted. Functionally, exhibits natriuretic and vasodepressor activity. Has a cGMP-stimulating activity. The chain is C-type natriuretic peptide 2 from Aquarana catesbeiana (American bullfrog).